A 214-amino-acid chain; its full sequence is Large ribosomal subunit protein uL3 (214 aa).

The disordered stretch occupies residues 131–155; that stretch reads GAQRTSHGNSRSHRVPGSIGMAQDP. The residue at position 153 (Gln153) is an N5-methylglutamine.

This sequence belongs to the universal ribosomal protein uL3 family. In terms of assembly, part of the 50S ribosomal subunit. Forms a cluster with proteins L14 and L19. Post-translationally, methylated by PrmB.

In terms of biological role, one of the primary rRNA binding proteins, it binds directly near the 3'-end of the 23S rRNA, where it nucleates assembly of the 50S subunit. This Neisseria meningitidis serogroup C (strain 053442) protein is Large ribosomal subunit protein uL3.